A 190-amino-acid polypeptide reads, in one-letter code: Probable DNA replication complex GINS protein PSF2 (190 aa).

It belongs to the GINS2/PSF2 family. Component of the GINS complex which is a heterotetramer of gins1, gins2, gins3 and gins4.

The protein resides in the nucleus. Its function is as follows. The GINS complex plays an essential role in the initiation of DNA replication. The polypeptide is Probable DNA replication complex GINS protein PSF2 (Brugia malayi (Filarial nematode worm)).